Here is a 171-residue protein sequence, read N- to C-terminus: AASPQKRAASPRKSPKKSPRKSPKKKSPRKRKARSAAHPPVIDMITAAIAAQKERRGSSVAKIQSYIAAKYRCDINALNPHIRRALKNQVKSGALKQVSGVGATGRFRVGAVKRSAASANKLKATREKARARAKAKKAKAAARRKAAAAKRKAAAAKRRAAKKARKAKAKP.

2 disordered regions span residues 1–40 and 133–171; these read AASPQKRAASPRKSPKKSPRKSPKKKSPRKRKARSAAHPP and AKAKKAKAAARRKAAAAKRKAAAAKRRAAKKARKAKAKP. Positions 9-35 are enriched in basic residues; that stretch reads ASPRKSPKKSPRKSPKKKSPRKRKARS. Residues 37 to 111 form the H15 domain; sequence AHPPVIDMIT…GATGRFRVGA (75 aa).

This sequence belongs to the histone H1/H5 family. As to expression, sperm.

It is found in the nucleus. The protein localises to the chromosome. Histones H1 are necessary for the condensation of nucleosome chains into higher-order structures. This Echinolampas crassa (Sea urchin) protein is Histone H1, gonadal.